The sequence spans 466 residues: Delta-1 crystallin (466 aa).

It belongs to the lyase 1 family. Argininosuccinate lyase subfamily. Homotetramer. In terms of tissue distribution, eye lens.

Functionally, delta crystallin, the principal crystallin in embryonic lens, is found only in birds and reptiles. Despite possessing the necessary catalytic residues, this protein does not function as an enzymatically active argininosuccinate lyase. In Anas platyrhynchos (Mallard), this protein is Delta-1 crystallin (ASL1).